The primary structure comprises 557 residues: DNA ligase (557 aa).

E249 provides a ligand contact to ATP. The N6-AMP-lysine intermediate role is filled by K251. 6 residues coordinate ATP: R256, R271, E301, F340, R417, and K423.

It belongs to the ATP-dependent DNA ligase family. It depends on Mg(2+) as a cofactor.

The enzyme catalyses ATP + (deoxyribonucleotide)n-3'-hydroxyl + 5'-phospho-(deoxyribonucleotide)m = (deoxyribonucleotide)n+m + AMP + diphosphate.. DNA ligase that seals nicks in double-stranded DNA during DNA replication, DNA recombination and DNA repair. In Methanothermobacter thermautotrophicus (Methanobacterium thermoformicicum), this protein is DNA ligase.